We begin with the raw amino-acid sequence, 432 residues long: Probable D-serine dehydratase (432 aa).

The residue at position 112 (Lys112) is an N6-(pyridoxal phosphate)lysine.

Belongs to the serine/threonine dehydratase family. DsdA subfamily. Pyridoxal 5'-phosphate serves as cofactor.

The catalysed reaction is D-serine = pyruvate + NH4(+). This Pediococcus pentosaceus (strain ATCC 25745 / CCUG 21536 / LMG 10740 / 183-1w) protein is Probable D-serine dehydratase.